Consider the following 293-residue polypeptide: 4-diphosphocytidyl-2-C-methyl-D-erythritol kinase (293 aa).

Residue Lys-16 is part of the active site. Residue 99 to 109 (PMGAGLGGGSS) coordinates ATP. Residue Asp-141 is part of the active site.

Belongs to the GHMP kinase family. IspE subfamily.

The catalysed reaction is 4-CDP-2-C-methyl-D-erythritol + ATP = 4-CDP-2-C-methyl-D-erythritol 2-phosphate + ADP + H(+). The protein operates within isoprenoid biosynthesis; isopentenyl diphosphate biosynthesis via DXP pathway; isopentenyl diphosphate from 1-deoxy-D-xylulose 5-phosphate: step 3/6. Functionally, catalyzes the phosphorylation of the position 2 hydroxy group of 4-diphosphocytidyl-2C-methyl-D-erythritol. This Burkholderia multivorans (strain ATCC 17616 / 249) protein is 4-diphosphocytidyl-2-C-methyl-D-erythritol kinase.